A 213-amino-acid chain; its full sequence is Cell division protein SepF (213 aa).

The segment at 27–103 (VDAPAPRRAP…GSLRGSAPTR (77 aa)) is disordered. Basic and acidic residues-rich tracts occupy residues 35-51 (APVEDRRYPRRGERFAD) and 72-90 (DEDRFVSRHAPSREFDRPA).

This sequence belongs to the SepF family. In terms of assembly, homodimer. Interacts with FtsZ.

It localises to the cytoplasm. Its function is as follows. Cell division protein that is part of the divisome complex and is recruited early to the Z-ring. Probably stimulates Z-ring formation, perhaps through the cross-linking of FtsZ protofilaments. Its function overlaps with FtsA. This Mycobacteroides abscessus (strain ATCC 19977 / DSM 44196 / CCUG 20993 / CIP 104536 / JCM 13569 / NCTC 13031 / TMC 1543 / L948) (Mycobacterium abscessus) protein is Cell division protein SepF.